The following is a 945-amino-acid chain: Soluble guanylate cyclase gcy-33 (945 aa).

Residue His104 participates in heme binding. Residues 388-413 (SEVLTEMTREISEAKKTARTLLTQMM) adopt a coiled-coil conformation. Residues 437-567 (SIGFIRVCDF…DTVNTASRME (131 aa)) form the Guanylate cyclase domain. 2 disordered regions span residues 639-679 (KEAE…LSGS) and 706-930 (QDEN…KCED). Low complexity predominate over residues 661-679 (SLGESIDSSSSRRGSLSGS). Over residues 711 to 720 (RPPTWSASHS) the composition is skewed to polar residues. Positions 721 to 731 (QDIRKPRKTES) are enriched in basic and acidic residues. The segment covering 732–744 (KITLNSRLSSSDL) has biased composition (polar residues). Basic and acidic residues-rich tracts occupy residues 750 to 759 (ETSKDSDGET) and 766 to 804 (ELKEVNRIREEALAQEKEEERTTKEENQKIEEVGEDHVS). Residues 763 to 802 (TSSELKEVNRIREEALAQEKEEERTTKEENQKIEEVGEDH) are a coiled coil. Residues 817-828 (GDNNISFSQMPS) are compositionally biased toward polar residues. Over residues 851 to 861 (ISKKKLEKEDS) the composition is skewed to basic and acidic residues. A compositionally biased stretch (polar residues) spans 862 to 884 (NSSMSSLDERTTVSAKPTTTRRL). Residues 886-896 (NQKDLEKEKKR) are compositionally biased toward basic and acidic residues. The segment covering 898-911 (SMAGSSVTSSSAHS) has biased composition (low complexity). The segment covering 916–930 (SKKDTRDKSRCKCED) has biased composition (basic and acidic residues).

This sequence belongs to the adenylyl cyclase class-4/guanylyl cyclase family. Heterodimer; with other soluble guanylate cyclases. It depends on heme as a cofactor. In terms of tissue distribution, expressed in BAG sensory neuron.

The protein resides in the cytoplasm. The enzyme catalyses GTP = 3',5'-cyclic GMP + diphosphate. May be regulated by molecular oxygen. Probably not activated by nitric oxide (NO). Synthesizes cyclic GMP (cGMP) from GTP. May be involved in sensitivity to quinine by regulating egl-4 activity through the production of cGMP. This is Soluble guanylate cyclase gcy-33 (gcy-33) from Caenorhabditis elegans.